We begin with the raw amino-acid sequence, 120 residues long: V-type proton ATPase subunit F (120 aa).

This sequence belongs to the V-ATPase F subunit family. As to quaternary structure, V-ATPase is a heteromultimeric enzyme composed of a peripheral catalytic V1 complex (components A to H) attached to an integral membrane V0 proton pore complex (components: a, c, c', c'' and d).

Its function is as follows. Subunit of the peripheral V1 complex of vacuolar ATPase essential for assembly or catalytic function. V-ATPase is responsible for acidifying a variety of intracellular compartments in eukaryotic cells. In Dictyostelium discoideum (Social amoeba), this protein is V-type proton ATPase subunit F (vatF).